An 891-amino-acid polypeptide reads, in one-letter code: MTKLTVKALSEDIGTPVDRLLQQFSDAGINKKDGDSVSEGEKQSLLIHLKKEHGSADESASPTRLTLQRKTRSTLSVAGSGGKSKDVQVEVRKKRTYVKASTLEEEKKTEQMKVEAGDKAKRDAEEAAVRELEQKAKREAEEKAKREAEAEVKVKRDAEQTAKRTKTEKAKKEMTTKNDQAKTEADELKLRQETEATRKAEAEAAKLVEDARKLAEENEGRWKEEEQKKTAAEKTADYHVTTSTHAREAEDAADRKDEQQPRRRKKKAKAAPVERGGRNQRGGRNRKPQVNKPTSMQHGFDKSATVAKQDVAIGETIIVSELANKMSVKATEVIKVMMKMGAMATINQVIDQETAALVAEEMGHKVVLRKENELEEAVLSDRDNSATVEGRAPVVTIMGHVDHGKTSTLDYIRRAHVADAEAGGITQHIGAYHVETDNGMITFLDTPGHAAFTAMRARGAQATDIVVLVVAADDGVMPQTIEAIQHAKAAGVPLIVAVNKIDKEGANPDNVKNELAQYDIIPEEWGGENMFVHISAKQGTNIEGLLEAILLQSEVLELTAVKEGMASGVVVESRLDKGRGPVATVLVQSGTLHKGDIVLCGQEYGRVRAMRDENGKDIDSAGPSIPVEILGLSGVPASGDEATVVRDERKAREVANYRQGKFRDVKLARQQKAKLENMFANMEAGEVAECNVVLKADVQGSVEAIADSLRKLSTDEVKVNIVGSGVGGITETDATLAAASNAILLGFNVRADTSARRTIENENLDLRYYSIIYQLIDEVKQAMGGMLAPEFRQEIIGLAQVREVFKSPKIGAVAGCMVTEGTIKRNNPIRVLRDNIVIYEGELESLRRFKDDMPEVKNGYECGIGVKNYNDVRVGDQIEVFEIVEIQRTLD.

Residues 50–303 (KKEHGSADES…TSMQHGFDKS (254 aa)) are disordered. 2 stretches are compositionally biased toward basic and acidic residues: residues 102–237 (TLEE…KTAD) and 245–261 (HARE…EQQP). One can recognise a tr-type G domain in the interval 390–559 (GRAPVVTIMG…LLQSEVLELT (170 aa)). Residues 399 to 406 (GHVDHGKT) are G1. A GTP-binding site is contributed by 399-406 (GHVDHGKT). The G2 stretch occupies residues 424-428 (GITQH). Positions 445-448 (DTPG) are G3. Residues 445–449 (DTPGH) and 499–502 (NKID) each bind GTP. Residues 499–502 (NKID) are G4. Residues 535–537 (SAK) are G5.

Belongs to the TRAFAC class translation factor GTPase superfamily. Classic translation factor GTPase family. IF-2 subfamily.

The protein localises to the cytoplasm. Its function is as follows. One of the essential components for the initiation of protein synthesis. Protects formylmethionyl-tRNA from spontaneous hydrolysis and promotes its binding to the 30S ribosomal subunits. Also involved in the hydrolysis of GTP during the formation of the 70S ribosomal complex. The chain is Translation initiation factor IF-2 from Aliivibrio salmonicida (strain LFI1238) (Vibrio salmonicida (strain LFI1238)).